The primary structure comprises 442 residues: Probable diguanylate cyclase DgcI (442 aa).

A signal peptide spans methionine 1–alanine 23. Cysteine 24 carries N-palmitoyl cysteine lipidation. A lipid anchor (S-diacylglycerol cysteine) is attached at cysteine 24. A helical transmembrane segment spans residues leucine 231–valine 251. The GGDEF domain occupies lysine 319 to glutamine 442. Aspartate 327 is a binding site for Mg(2+). Residues asparagine 335, histidine 340, and aspartate 344 each coordinate substrate. Aspartate 371 is a Mg(2+) binding site.

As to quaternary structure, homodimer. Mg(2+) serves as cofactor.

Its subcellular location is the cell membrane. The enzyme catalyses 2 GTP = 3',3'-c-di-GMP + 2 diphosphate. Its pathway is purine metabolism; 3',5'-cyclic di-GMP biosynthesis. Functionally, catalyzes the synthesis of cyclic-di-GMP (c-di-GMP) via the condensation of 2 GTP molecules. The polypeptide is Probable diguanylate cyclase DgcI (Escherichia coli (strain K12)).